The primary structure comprises 101 residues: NAD(P)H-quinone oxidoreductase subunit 4L, chloroplastic (101 aa).

The next 3 helical transmembrane spans lie at 2–22 (MLEH…FGLI), 32–52 (MCLE…SHLF), and 61–81 (IFSI…LAIV).

Belongs to the complex I subunit 4L family. In terms of assembly, NDH is composed of at least 16 different subunits, 5 of which are encoded in the nucleus.

The protein resides in the plastid. The protein localises to the chloroplast thylakoid membrane. The catalysed reaction is a plastoquinone + NADH + (n+1) H(+)(in) = a plastoquinol + NAD(+) + n H(+)(out). It carries out the reaction a plastoquinone + NADPH + (n+1) H(+)(in) = a plastoquinol + NADP(+) + n H(+)(out). Its function is as follows. NDH shuttles electrons from NAD(P)H:plastoquinone, via FMN and iron-sulfur (Fe-S) centers, to quinones in the photosynthetic chain and possibly in a chloroplast respiratory chain. The immediate electron acceptor for the enzyme in this species is believed to be plastoquinone. Couples the redox reaction to proton translocation, and thus conserves the redox energy in a proton gradient. The chain is NAD(P)H-quinone oxidoreductase subunit 4L, chloroplastic from Piper cenocladum (Ant piper).